We begin with the raw amino-acid sequence, 318 residues long: Beta-ketoacyl-[acyl-carrier-protein] synthase III (318 aa).

Catalysis depends on residues Cys-113 and His-245. Positions 246–250 (QANIR) are ACP-binding. The active site involves Asn-275.

Belongs to the thiolase-like superfamily. FabH family. Homodimer.

The protein localises to the cytoplasm. The enzyme catalyses malonyl-[ACP] + acetyl-CoA + H(+) = 3-oxobutanoyl-[ACP] + CO2 + CoA. Its pathway is lipid metabolism; fatty acid biosynthesis. Functionally, catalyzes the condensation reaction of fatty acid synthesis by the addition to an acyl acceptor of two carbons from malonyl-ACP. Catalyzes the first condensation reaction which initiates fatty acid synthesis and may therefore play a role in governing the total rate of fatty acid production. Possesses both acetoacetyl-ACP synthase and acetyl transacylase activities. Its substrate specificity determines the biosynthesis of branched-chain and/or straight-chain of fatty acids. In Wolbachia pipientis wMel, this protein is Beta-ketoacyl-[acyl-carrier-protein] synthase III.